The following is a 601-amino-acid chain: Glutathione-regulated potassium-efflux system protein KefB (601 aa).

Helical transmembrane passes span 4–24 (SDFL…VPLA), 29–49 (IGAV…GLGF), 55–75 (EILH…GLEL), 87–107 (IFGV…GLLM), 115–135 (AAVV…LQLM), 152–172 (VLLF…LLAG), 177–197 (HFDW…LIGG), 207–227 (FIAA…LVLG), 230–250 (LFMD…GVLL), 268–288 (GLLL…GVLY), 291–311 (LLWV…VLYL), 324–344 (MQFA…FSSA), and 356–376 (ALLL…MKLV). One can recognise an RCK N-terminal domain in the interval 400–519 (KPQVIVVGFG…AGVTQFSRET (120 aa)).

It belongs to the monovalent cation:proton antiporter 2 (CPA2) transporter (TC 2.A.37) family. KefB subfamily. In terms of assembly, interacts with the regulatory subunit KefG.

Its subcellular location is the cell inner membrane. Functionally, pore-forming subunit of a potassium efflux system that confers protection against electrophiles. Catalyzes K(+)/H(+) antiport. The sequence is that of Glutathione-regulated potassium-efflux system protein KefB from Escherichia coli O127:H6 (strain E2348/69 / EPEC).